Here is a 239-residue protein sequence, read N- to C-terminus: Serine protease SplF (239 aa).

Positions 1-36 (MNKNIIIKSIAALTILTSITGVGTTVVDGIQQTAKA) are cleaved as a signal peptide. Active-site charge relay system residues include histidine 75, aspartate 114, and serine 192.

The protein belongs to the peptidase S1B family.

The protein resides in the secreted. This chain is Serine protease SplF (splF), found in Staphylococcus aureus (strain JH9).